Here is a 279-residue protein sequence, read N- to C-terminus: Shikimate dehydrogenase (NADP(+)) (279 aa).

Shikimate-binding positions include 18-20 (SRS) and Thr-64. The active-site Proton acceptor is Lys-68. Position 80 (Glu-80) interacts with NADP(+). The shikimate site is built by Asn-89 and Asp-104. Residues 129–133 (GAGGA), 153–158 (NRTVSR), and Ile-218 each bind NADP(+). Tyr-220 contributes to the shikimate binding site. Gly-241 contacts NADP(+).

The protein belongs to the shikimate dehydrogenase family. As to quaternary structure, homodimer.

It carries out the reaction shikimate + NADP(+) = 3-dehydroshikimate + NADPH + H(+). The protein operates within metabolic intermediate biosynthesis; chorismate biosynthesis; chorismate from D-erythrose 4-phosphate and phosphoenolpyruvate: step 4/7. In terms of biological role, involved in the biosynthesis of the chorismate, which leads to the biosynthesis of aromatic amino acids. Catalyzes the reversible NADPH linked reduction of 3-dehydroshikimate (DHSA) to yield shikimate (SA). The protein is Shikimate dehydrogenase (NADP(+)) of Chelativorans sp. (strain BNC1).